Reading from the N-terminus, the 270-residue chain is Small ribosomal subunit protein eS1 (270 aa).

Disordered stretches follow at residues 1 to 20 (MAVG…SKKK) and 238 to 270 (GGGK…QESV).

Belongs to the eukaryotic ribosomal protein eS1 family. Component of the small ribosomal subunit. Mature ribosomes consist of a small (40S) and a large (60S) subunit. The 40S subunit contains about 33 different proteins and 1 molecule of RNA (18S). The 60S subunit contains about 49 different proteins and 3 molecules of RNA (28S, 5.8S and 5S).

Its subcellular location is the cytoplasm. This Culex quinquefasciatus (Southern house mosquito) protein is Small ribosomal subunit protein eS1.